A 299-amino-acid chain; its full sequence is Lipoyl synthase (299 aa).

Residues Cys-45, Cys-50, Cys-56, Cys-71, Cys-75, Cys-78, and Ser-284 each coordinate [4Fe-4S] cluster. The Radical SAM core domain occupies 57-273 (YSKGTATFMI…GDVALAKDFL (217 aa)).

Belongs to the radical SAM superfamily. Lipoyl synthase family. [4Fe-4S] cluster serves as cofactor.

It localises to the cytoplasm. The catalysed reaction is [[Fe-S] cluster scaffold protein carrying a second [4Fe-4S](2+) cluster] + N(6)-octanoyl-L-lysyl-[protein] + 2 oxidized [2Fe-2S]-[ferredoxin] + 2 S-adenosyl-L-methionine + 4 H(+) = [[Fe-S] cluster scaffold protein] + N(6)-[(R)-dihydrolipoyl]-L-lysyl-[protein] + 4 Fe(3+) + 2 hydrogen sulfide + 2 5'-deoxyadenosine + 2 L-methionine + 2 reduced [2Fe-2S]-[ferredoxin]. It participates in protein modification; protein lipoylation via endogenous pathway; protein N(6)-(lipoyl)lysine from octanoyl-[acyl-carrier-protein]: step 2/2. In terms of biological role, catalyzes the radical-mediated insertion of two sulfur atoms into the C-6 and C-8 positions of the octanoyl moiety bound to the lipoyl domains of lipoate-dependent enzymes, thereby converting the octanoylated domains into lipoylated derivatives. The sequence is that of Lipoyl synthase from Desulfotalea psychrophila (strain LSv54 / DSM 12343).